The following is a 403-amino-acid chain: MSIMKIATLFFAALSAVEAAKLLTPSDKRDIVPDSYIVVMKDNVSPLKFDSHMSWATNVHHANLARQGSTATGGLKHVYRIDGWQGYSGSFARETIDRILENDDVDYVEPDRRVHLTALTTQPNAPSWGLGRISHRNNGNSNFVYDDRAGEGITFYGVDTGIDINHPDFGGRAVWGTNTAGGSDSDGHGHGTHTAGTVAGASYGIAKKAKLVAVKVLSEGGTGQWSGIIEGINWSVNHARANNALGKAVMNMSLGGRLSTSVNQATTRAQRAGIFIAVAAGNEDPSVQSDAANTSPASAEDVCTVAASTEQDGRASFSNWGSMVEIYAPGTNIVSTTPGGNTGKMSGTSMAAPHVAGVGAAIMASEGISPSEVCSRLVEIGLEQISNPGSGTTNKLLYNNSGR.

Positions 1-19 are cleaved as a signal peptide; it reads MSIMKIATLFFAALSAVEA. Residues 20–117 constitute a propeptide that is removed on maturation; it reads AKLLTPSDKR…VEPDRRVHLT (98 aa). One can recognise an Inhibitor I9 domain in the interval 35-116; it reads SYIVVMKDNV…YVEPDRRVHL (82 aa). Residues 127 to 403 enclose the Peptidase S8 domain; that stretch reads SWGLGRISHR…NKLLYNNSGR (277 aa). Catalysis depends on charge relay system residues D159 and H190. N-linked (GlcNAc...) asparagine glycans are attached at residues N233 and N251. S349 serves as the catalytic Charge relay system. An N-linked (GlcNAc...) asparagine glycan is attached at N399.

It belongs to the peptidase S8 family.

It is found in the secreted. Its function is as follows. Secreted subtilisin-like serine protease with keratinolytic activity that contributes to pathogenicity. This Coccidioides posadasii (strain C735) (Valley fever fungus) protein is Subtilisin-like protease CPC735_035780.